The sequence spans 275 residues: NH(3)-dependent NAD(+) synthetase (275 aa).

Position 46 to 53 (46 to 53 (GISGGQDS)) interacts with ATP. Aspartate 52 contributes to the Mg(2+) binding site. Arginine 140 contacts deamido-NAD(+). Threonine 160 provides a ligand contact to ATP. Residue glutamate 165 participates in Mg(2+) binding. The deamido-NAD(+) site is built by lysine 173 and aspartate 180. ATP is bound by residues lysine 189 and threonine 211. 260 to 261 (HK) is a deamido-NAD(+) binding site.

Belongs to the NAD synthetase family. In terms of assembly, homodimer.

It catalyses the reaction deamido-NAD(+) + NH4(+) + ATP = AMP + diphosphate + NAD(+) + H(+). Its pathway is cofactor biosynthesis; NAD(+) biosynthesis; NAD(+) from deamido-NAD(+) (ammonia route): step 1/1. In terms of biological role, catalyzes the ATP-dependent amidation of deamido-NAD to form NAD. Uses ammonia as a nitrogen source. The sequence is that of NH(3)-dependent NAD(+) synthetase from Escherichia fergusonii (strain ATCC 35469 / DSM 13698 / CCUG 18766 / IAM 14443 / JCM 21226 / LMG 7866 / NBRC 102419 / NCTC 12128 / CDC 0568-73).